The chain runs to 231 residues: Potassium/proton antiporter CemA (231 aa).

The next 4 helical transmembrane spans lie at 7–27, 116–136, 156–176, and 191–211; these read FISL…SLSF, IISF…LIFL, ILLL…ELMI, and IISG…KYWI.

This sequence belongs to the CemA family.

Its subcellular location is the plastid. The protein localises to the chloroplast inner membrane. It catalyses the reaction K(+)(in) + H(+)(out) = K(+)(out) + H(+)(in). In terms of biological role, contributes to K(+)/H(+) antiport activity by supporting proton efflux to control proton extrusion and homeostasis in chloroplasts in a light-dependent manner to modulate photosynthesis. Prevents excessive induction of non-photochemical quenching (NPQ) under continuous-light conditions. Indirectly promotes efficient inorganic carbon uptake into chloroplasts. In Morus indica (Mulberry), this protein is Potassium/proton antiporter CemA.